A 435-amino-acid chain; its full sequence is Tubulin-like protein TubZ (435 aa).

Residues 25–26, 124–126, asparagine 185, and asparagine 209 each bind GTP; these read MG and GTG. The interval 403–435 is disordered; that stretch reads QEEKPKKKKLNFGAEPEAEVADDSQPTKKKLSF.

It belongs to the FtsZ family. TubZ subfamily. In terms of assembly, polymerizes to form two-stranded filaments and bundles at higher concentration in the presence of GTP. Binds to the TubR-tubC protein DNA complex.

It is found in the cytoplasm. The enzyme catalyses GTP + H2O = GDP + phosphate + H(+). GTPase inhibited by GTP-gamma-S, which also stabilizes filaments. A tubulin-like, filament forming GTPase; the motor component of the type III plasmid partition system which ensures correct segregation of the pXO1 plasmid. Essential for plasmid replication. The filaments seed from a DNA centromere-like site (tubC)-TubR complex which extends to surround the TubZ filaments. Highly dynamic filaments grow at the plus end and depolymerize at the minus end, a process called treadmilling. TubR-tubC complexes track the depolymerizing minus end of the filament, probably pulling plasmid within the cell. Has a high GTPase activity; in the presence of GTP assembles into dynamic filaments which bind almost exclusively GDP. Filament formation is cooperative, requiring a critical concentration. Formation occurs very quickly and is followed by disassembly as GTP is consumed. Small amounts of GTP-gamma-S stabilize filaments. Has high GTP and dGTPase activity, 6-fold lower ATPase activity. Forms filaments in the presence of ATP that also disassemble. Weakly binds DNA in a GTP-dependent, non-sequence-specific manner; GTP hydrolysis is not required for DNA-binding. The chain is Tubulin-like protein TubZ from Bacillus anthracis.